Consider the following 302-residue polypeptide: Urease accessory protein UreD (302 aa).

Belongs to the UreD family. UreD, UreF and UreG form a complex that acts as a GTP-hydrolysis-dependent molecular chaperone, activating the urease apoprotein by helping to assemble the nickel containing metallocenter of UreC. The UreE protein probably delivers the nickel.

The protein localises to the cytoplasm. In terms of biological role, required for maturation of urease via the functional incorporation of the urease nickel metallocenter. This chain is Urease accessory protein UreD, found in Pseudoalteromonas translucida (strain TAC 125).